Reading from the N-terminus, the 103-residue chain is Large ribosomal subunit protein bL21 (103 aa).

The protein belongs to the bacterial ribosomal protein bL21 family. As to quaternary structure, part of the 50S ribosomal subunit. Contacts protein L20.

In terms of biological role, this protein binds to 23S rRNA in the presence of protein L20. The chain is Large ribosomal subunit protein bL21 from Nitrosomonas europaea (strain ATCC 19718 / CIP 103999 / KCTC 2705 / NBRC 14298).